The sequence spans 181 residues: Adenine phosphoribosyltransferase (181 aa).

Belongs to the purine/pyrimidine phosphoribosyltransferase family. Homodimer.

Its subcellular location is the cytoplasm. The enzyme catalyses AMP + diphosphate = 5-phospho-alpha-D-ribose 1-diphosphate + adenine. The protein operates within purine metabolism; AMP biosynthesis via salvage pathway; AMP from adenine: step 1/1. Its function is as follows. Catalyzes a salvage reaction resulting in the formation of AMP, that is energically less costly than de novo synthesis. The protein is Adenine phosphoribosyltransferase of Aliivibrio salmonicida (strain LFI1238) (Vibrio salmonicida (strain LFI1238)).